The following is a 219-amino-acid chain: Carboxypeptidase Y inhibitor (219 aa).

At methionine 1 the chain carries N-acetylmethionine.

It belongs to the phosphatidylethanolamine-binding protein family. Monomer.

It is found in the cytoplasm. Functionally, specific and potent inhibitor of carboxypeptidase Y. The chain is Carboxypeptidase Y inhibitor (TFS1) from Saccharomyces cerevisiae (strain ATCC 204508 / S288c) (Baker's yeast).